Consider the following 266-residue polypeptide: MIAMNTPDFQRMKKDNKKISMVTCYDYWSACIISQSNVDCILVGDSLAMVMYGHSTTLPATVEIMAQHIQAVSRGAPNKFIIGDMPFCSYRKDLTTSMNAVERLMQAGAQAIKLEGADAHNLKFIHHVVKSGIPVIGHLGLTPQSIYTLGGFKVQGKEPSAAKKLMADAKALAETGCFAMVLECVPSELAELITHSISIPTIGIGAGPATSGQVLVLQDLLGTNNQFQPKYLKKFLNGFELIKKALDDFDQEVKTSTYPHLETHCY.

Aspartate 45 and aspartate 84 together coordinate Mg(2+). Residues 45 to 46 (DS), aspartate 84, and lysine 113 each bind 3-methyl-2-oxobutanoate. Glutamate 115 is a Mg(2+) binding site. Catalysis depends on glutamate 183, which acts as the Proton acceptor.

It belongs to the PanB family. As to quaternary structure, homodecamer; pentamer of dimers. Mg(2+) serves as cofactor.

It localises to the cytoplasm. It carries out the reaction 3-methyl-2-oxobutanoate + (6R)-5,10-methylene-5,6,7,8-tetrahydrofolate + H2O = 2-dehydropantoate + (6S)-5,6,7,8-tetrahydrofolate. Its pathway is cofactor biosynthesis; (R)-pantothenate biosynthesis; (R)-pantoate from 3-methyl-2-oxobutanoate: step 1/2. Functionally, catalyzes the reversible reaction in which hydroxymethyl group from 5,10-methylenetetrahydrofolate is transferred onto alpha-ketoisovalerate to form ketopantoate. In Coxiella burnetii (strain CbuG_Q212) (Coxiella burnetii (strain Q212)), this protein is 3-methyl-2-oxobutanoate hydroxymethyltransferase.